Consider the following 168-residue polypeptide: Pollen allergen Che a 1 (168 aa).

The N-terminal stretch at 1–25 (MAKCQAVFLLVGALCVLSLAGVANA) is a signal peptide. 3 disulfide bridges follow: Cys-38–Cys-109, Cys-41–Cys-153, and Cys-62–Cys-97. Asn-64 carries N-linked (GlcNAc...) asparagine glycosylation.

Belongs to the Ole e I family.

It is found in the secreted. The sequence is that of Pollen allergen Che a 1 from Chenopodium album (Fat hen).